Reading from the N-terminus, the 294-residue chain is Cytidine deaminase (294 aa).

CMP/dCMP-type deaminase domains follow at residues 48–168 (DEDA…FGPK) and 186–294 (LTGD…VLLG). A substrate-binding site is contributed by 89-91 (NME). Zn(2+) is bound at residue His102. Glu104 serves as the catalytic Proton donor. Zn(2+) is bound by residues Cys129 and Cys132.

Belongs to the cytidine and deoxycytidylate deaminase family. Homodimer. Requires Zn(2+) as cofactor.

The enzyme catalyses cytidine + H2O + H(+) = uridine + NH4(+). The catalysed reaction is 2'-deoxycytidine + H2O + H(+) = 2'-deoxyuridine + NH4(+). Its function is as follows. This enzyme scavenges exogenous and endogenous cytidine and 2'-deoxycytidine for UMP synthesis. The chain is Cytidine deaminase from Salmonella newport (strain SL254).